We begin with the raw amino-acid sequence, 96 residues long: Large ribosomal subunit protein bL25 (96 aa).

Belongs to the bacterial ribosomal protein bL25 family. As to quaternary structure, part of the 50S ribosomal subunit; part of the 5S rRNA/L5/L18/L25 subcomplex. Contacts the 5S rRNA. Binds to the 5S rRNA independently of L5 and L18.

In terms of biological role, this is one of the proteins that binds to the 5S RNA in the ribosome where it forms part of the central protuberance. This is Large ribosomal subunit protein bL25 from Francisella philomiragia subsp. philomiragia (strain ATCC 25017 / CCUG 19701 / FSC 153 / O#319-036).